We begin with the raw amino-acid sequence, 777 residues long: MQLNFLLFVFIFLMVFHLNIFNKGKRQNLVSAYLNHFKKSYFSGVTSGSDCVNKSEVSSDNNNNNNNNNNKIAHNFFSKKYQRNFENNNLSENQENNKNIIYSGSNIFKNIYNTEMMSNNNTVDVNMMDNNPAARLEELRTIMKKNKIDVYILINSDEHNSEIINEKDKKIVKITNYSGADGILIVTKDKPILYVNALYELQAMNELDQNLFTLRISRIDNRDEIFETISSLEFNTIAFDGKNTSVVFYEKLRKALLNAYPKKKIVEKIIYNNNFDDVNKKDDENVLNFLVLEKSLVEIKDYPVNNKTLYIHDRKYNGACAGEKIDKLKQSLMYDIKNVDNLLLSELDEIAYLLNLRGYDYQYSPLFYSYLLFQFDREEQDFSKIVFFTTVKNLPADVKNLLEINKVIVKEYEEIVPYLRDVVIPSIPKHNDDNPDFKKYDISLSPYINLMIYKLFDRKNVLLQNSPVVKMKAVKNDVEIDNMKQAHILDGLALLQFFHWCEQKRKTKELFNETEMSLRHKVDYFRSTKKNFIFPSFSTISASGPNAAVIHYECTDKTNATIKPAIYLLDSGGQYLHGTTDVTRTTHFGEPTAEEKRIYTLVLKGHLRLRKVIFASYTNSSALDFIARENLFNNFMDYNHGTGHGVGLTLNVHEGGCSIGPVGGAPLKKNMVLSNEPGYYMKDKFGVRIENMQYVISKEITDTTEYLSFDDLTMYPYEKKLLDFSLLTNQEIKELNEYHTTIRNTLLPLVKQSPQEYGESVEKYLIEITEPIAIHNN.

Residues 1 to 17 (MQLNFLLFVFIFLMVFH) form the signal peptide. A substrate-binding site is contributed by histidine 551. Mn(2+)-binding residues include aspartate 570 and aspartate 581. Histidine 640 contacts substrate. Residue histidine 644 participates in Mn(2+) binding. Histidine 653 is a binding site for substrate. Positions 676 and 690 each coordinate Mn(2+).

The protein belongs to the peptidase M24B family. Homodimer. The cofactor is Mn(2+). The N-terminus may be proteolytically cleaved to generate a 73-kDa mature form.

It is found in the vacuole lumen. Its subcellular location is the cytoplasm. The catalysed reaction is Release of any N-terminal amino acid, including proline, that is linked to proline, even from a dipeptide or tripeptide.. With respect to regulation, partially activated by Co(2+) and Mg(2+) has no effect. Inhibited by 1 mM Zn(2+), Ni(2+), or Cu(2+). Inhibited by apstatin, a non-hydrolysable peptide analog. Its function is as follows. Catalyzes the removal of a penultimate prolyl residue from the N-termini of peptides. In the food vacuole, involved in the final step of host hemoglobin catabolism, by cleaving hemoglobin-derived oligopeptides. In the cytoplasm, may be involved in the last steps of the turnover of ubiquitinated proteins. The sequence is that of Aminopeptidase P from Plasmodium falciparum (isolate 3D7).